The primary structure comprises 346 residues: DNA-directed RNA polymerase subunit alpha (346 aa).

The alpha N-terminal domain (alpha-NTD) stretch occupies residues 1–233 (MLRDEVAVSA…DLFIPFLHAE (233 aa)). Residues 268-346 (IELKCIFIDQ…NKFLIGNPSE (79 aa)) are alpha C-terminal domain (alpha-CTD).

This sequence belongs to the RNA polymerase alpha chain family. As to quaternary structure, in plastids the minimal PEP RNA polymerase catalytic core is composed of four subunits: alpha, beta, beta', and beta''. When a (nuclear-encoded) sigma factor is associated with the core the holoenzyme is formed, which can initiate transcription.

It localises to the plastid. The protein localises to the chloroplast. The catalysed reaction is RNA(n) + a ribonucleoside 5'-triphosphate = RNA(n+1) + diphosphate. Functionally, DNA-dependent RNA polymerase catalyzes the transcription of DNA into RNA using the four ribonucleoside triphosphates as substrates. This is DNA-directed RNA polymerase subunit alpha from Ranunculus macranthus (Large buttercup).